The primary structure comprises 150 residues: Large ribosomal subunit protein bL9 (150 aa).

This sequence belongs to the bacterial ribosomal protein bL9 family.

Its function is as follows. Binds to the 23S rRNA. In Moorella thermoacetica (strain ATCC 39073 / JCM 9320), this protein is Large ribosomal subunit protein bL9.